The following is a 511-amino-acid chain: MTTHNDDAAAALPQDENKIIAERRAKLSALREQGIAFPNDFRPQHKAADLHEKYDGKTREELEAEPVTVTLAGRMMLKREAGKKAAFATLQDASGAKADGRIQIYATLDLTGEAAMAALHHYDLGDILGVVGTLFKTKTDELTIKVTELRLLTKSLRPLPDKFHGLADQETKYRQRYVDLIMNEDTRRTFKARTAAISSIRRFMAENDFMEVETPMLHTIPGGAAAKPFVTHHNALDMEMFLRIAPELYLKRLVVGGFDRVFEINRNFRNEGVSIRHNPEFTMMEFYAAYTDYKWLMDFTEAVIRQAAIDAHGTATLTYGGRELDLAKPFHRLTIVGAINKYAPQYTNEQLHDAEFIKAELKKFGVKPHAHSGLGALQLALFEETAEAQLWEPTYIIDYPVEVSPLARASDTVAGITERFELFMVGREIANGFSELNDAEDQAARFQAQVAAKDAGDEEAMYYDADYIRALEYGMPPTGGCGIGIDRLMMIITDSPNIRDVLLFPHLRRED.

Mg(2+)-binding residues include Glu-421 and Glu-428.

This sequence belongs to the class-II aminoacyl-tRNA synthetase family. In terms of assembly, homodimer. Requires Mg(2+) as cofactor.

The protein localises to the cytoplasm. The enzyme catalyses tRNA(Lys) + L-lysine + ATP = L-lysyl-tRNA(Lys) + AMP + diphosphate. The polypeptide is Lysine--tRNA ligase (Janthinobacterium sp. (strain Marseille) (Minibacterium massiliensis)).